The following is a 304-amino-acid chain: MEAFSGTPVVVAVAAVAATVLLLLLLRGAGRRPGRPVTLRDPQAKYPLPLVGKEEISHDTKKFRFGLPSPDHVLGLPVGQHVYLSAKINGNLVIRAYTPVSSDETKGYVDLIIKVYYKNVNPKFPEGGKMSQYLDSMKIGDVIDFRGPNGLLVYKGSGTFMIKPDKKSEAQRKFAKHLGVIAGGTGITPMLQLIRHITSDPKDSTKCYLLFANQTEKDILLRAELEDIAKRHPDQVRLWYTLDRPPQDWKYSSGFVTADMIKTHLPPPGGETLILMCGPPPMIQFACQPNLDKLGYPKSSTFSY.

A helical transmembrane segment spans residues 6 to 26 (GTPVVVAVAAVAATVLLLLLL). The region spanning 43–155 (QAKYPLPLVG…RGPNGLLVYK (113 aa)) is the FAD-binding FR-type domain. Residues 135-165 (DSMK…IKPD) and 174-209 (FAKH…KCYL) each bind FAD.

It belongs to the flavoprotein pyridine nucleotide cytochrome reductase family. The cofactor is FAD.

It localises to the membrane. It carries out the reaction 2 Fe(III)-[cytochrome b5] + NADH = 2 Fe(II)-[cytochrome b5] + NAD(+) + H(+). Its function is as follows. NADH-cytochrome b5 reductases are involved in desaturation and elongation of fatty acids, cholesterol biosynthesis and drug metabolism. This chain is NADH-cytochrome b5 reductase 2 (CYB5R2), found in Gallus gallus (Chicken).